The chain runs to 679 residues: DNA ligase (679 aa).

Residues Asp41–Asp45, Ser90–Leu91, and Glu120 each bind NAD(+). Lys122 serves as the catalytic N6-AMP-lysine intermediate. Arg143, Glu177, Lys293, and Lys317 together coordinate NAD(+). Residues Cys411, Cys414, Cys429, and Cys434 each coordinate Zn(2+). The region spanning Asp597–Ala679 is the BRCT domain.

The protein belongs to the NAD-dependent DNA ligase family. LigA subfamily. It depends on Mg(2+) as a cofactor. Mn(2+) serves as cofactor.

It carries out the reaction NAD(+) + (deoxyribonucleotide)n-3'-hydroxyl + 5'-phospho-(deoxyribonucleotide)m = (deoxyribonucleotide)n+m + AMP + beta-nicotinamide D-nucleotide.. In terms of biological role, DNA ligase that catalyzes the formation of phosphodiester linkages between 5'-phosphoryl and 3'-hydroxyl groups in double-stranded DNA using NAD as a coenzyme and as the energy source for the reaction. It is essential for DNA replication and repair of damaged DNA. The polypeptide is DNA ligase (Lactiplantibacillus plantarum (strain ATCC BAA-793 / NCIMB 8826 / WCFS1) (Lactobacillus plantarum)).